A 426-amino-acid polypeptide reads, in one-letter code: Glutamyl-tRNA reductase (426 aa).

Substrate contacts are provided by residues 52 to 55 (TCNR), Ser110, 115 to 117 (EYE), and Gln121. Residue Cys53 is the Nucleophile of the active site. 190 to 195 (GAGEMG) serves as a coordination point for NADP(+).

It belongs to the glutamyl-tRNA reductase family. Homodimer.

The catalysed reaction is (S)-4-amino-5-oxopentanoate + tRNA(Glu) + NADP(+) = L-glutamyl-tRNA(Glu) + NADPH + H(+). It functions in the pathway porphyrin-containing compound metabolism; protoporphyrin-IX biosynthesis; 5-aminolevulinate from L-glutamyl-tRNA(Glu): step 1/2. In terms of biological role, catalyzes the NADPH-dependent reduction of glutamyl-tRNA(Glu) to glutamate 1-semialdehyde (GSA). This chain is Glutamyl-tRNA reductase, found in Saccharolobus islandicus (strain Y.N.15.51 / Yellowstone #2) (Sulfolobus islandicus).